Here is a 500-residue protein sequence, read N- to C-terminus: Trehalose-6-phosphate synthase (500 aa).

Residue R28 coordinates D-glucose 6-phosphate. 48 to 49 (GG) contacts UDP-alpha-D-glucose. 2 residues coordinate D-glucose 6-phosphate: Y104 and D158. UDP-alpha-D-glucose is bound by residues R300 and K305. A D-glucose 6-phosphate-binding site is contributed by R338. 403–407 (LVAKE) contacts UDP-alpha-D-glucose.

The protein belongs to the glycosyltransferase 20 family. In terms of assembly, homotetramer.

The catalysed reaction is ADP-alpha-D-glucose + D-glucose 6-phosphate = alpha,alpha-trehalose 6-phosphate + ADP + H(+). It carries out the reaction CDP-alpha-D-glucose + D-glucose 6-phosphate = alpha,alpha-trehalose 6-phosphate + CDP + H(+). The enzyme catalyses GDP-alpha-D-glucose + D-glucose 6-phosphate = alpha,alpha-trehalose 6-phosphate + GDP + H(+). It catalyses the reaction TDP-alpha-D-glucose + D-glucose 6-phosphate = 5-methyl-UDP + alpha,alpha-trehalose 6-phosphate + H(+). The catalysed reaction is D-glucose 6-phosphate + UDP-alpha-D-glucose = alpha,alpha-trehalose 6-phosphate + UDP + H(+). The protein operates within glycan biosynthesis; trehalose biosynthesis. Probably involved in the osmoprotection via the biosynthesis of trehalose and in the production of glycogen and alpha-glucan via the TreS-Pep2 branch involved in the biosynthesis of maltose-1-phosphate (M1P). Catalyzes the transfer of glucose from UDP-glucose (UDP-Glc) to D-glucose 6-phosphate (Glc-6-P) to form trehalose-6-phosphate. Probably also able to use ADP-Glc, CDP-Glc, GDP-Glc and TDP-Glc as glucosyl donors. This Mycobacterium marinum (strain ATCC BAA-535 / M) protein is Trehalose-6-phosphate synthase.